Reading from the N-terminus, the 482-residue chain is Variant surface glycoprotein ANTAT 1.1C (482 aa).

The N-terminal stretch at 1-8 (LHPQQALA) is a signal peptide. 2 disulfides stabilise this stretch: cysteine 24–cysteine 151 and cysteine 133–cysteine 188. The N-linked (GlcNAc...) asparagine glycan is linked to asparagine 92. Asparagine 398 and asparagine 411 each carry an N-linked (GlcNAc...) asparagine glycan. Aspartate 459 carries GPI-anchor amidated aspartate lipidation. A propeptide spans 460–482 (SSILVTKKFALSLVSAAFASLLF) (removed in mature form).

It localises to the cell membrane. Its function is as follows. VSG forms a coat on the surface of the parasite. The trypanosome evades the immune response of the host by expressing a series of antigenically distinct VSGs from an estimated 1000 VSG genes. The polypeptide is Variant surface glycoprotein ANTAT 1.1C (Trypanosoma brucei brucei).